The primary structure comprises 158 residues: MQGRLSAWLAKHRLVHRSLGFDYQGIETLQIKPEDWHSIAVILYVYGYNYLRSQCAYDVAPGGLLASVYHLTRIQYGVDQPEEVCIKVFAPRRNPRIPSVFWIWKSADFQERESYDMLGISYDNHPRLKRILMPESWIGWPLRKDYIAPNFYEIQDAH.

Belongs to the complex I 30 kDa subunit family. As to quaternary structure, NDH is composed of at least 16 different subunits, 5 of which are encoded in the nucleus.

The protein localises to the plastid. Its subcellular location is the chloroplast thylakoid membrane. It carries out the reaction a plastoquinone + NADH + (n+1) H(+)(in) = a plastoquinol + NAD(+) + n H(+)(out). It catalyses the reaction a plastoquinone + NADPH + (n+1) H(+)(in) = a plastoquinol + NADP(+) + n H(+)(out). In terms of biological role, NDH shuttles electrons from NAD(P)H:plastoquinone, via FMN and iron-sulfur (Fe-S) centers, to quinones in the photosynthetic chain and possibly in a chloroplast respiratory chain. The immediate electron acceptor for the enzyme in this species is believed to be plastoquinone. Couples the redox reaction to proton translocation, and thus conserves the redox energy in a proton gradient. This is NAD(P)H-quinone oxidoreductase subunit J, chloroplastic from Ranunculus macranthus (Large buttercup).